The chain runs to 93 residues: Allatostatin C (93 aa).

The first 23 residues, 1–23 (MSSVRNIAALALVLLVLAEWSAA), serve as a signal peptide directing secretion. The propeptide occupies 24–61 (MPTTDKDKERLLNTVDLIDDDGSIETALINYLFTKQIV). An intrachain disulfide couples Cys83 to Cys90.

It is found in the secreted. Functionally, inhibits juvenile hormone biosynthesis. This is Allatostatin C from Camponotus floridanus (Florida carpenter ant).